Reading from the N-terminus, the 345-residue chain is S-adenosylmethionine:tRNA ribosyltransferase-isomerase (345 aa).

This sequence belongs to the QueA family. Monomer.

The protein resides in the cytoplasm. The enzyme catalyses 7-aminomethyl-7-carbaguanosine(34) in tRNA + S-adenosyl-L-methionine = epoxyqueuosine(34) in tRNA + adenine + L-methionine + 2 H(+). It participates in tRNA modification; tRNA-queuosine biosynthesis. In terms of biological role, transfers and isomerizes the ribose moiety from AdoMet to the 7-aminomethyl group of 7-deazaguanine (preQ1-tRNA) to give epoxyqueuosine (oQ-tRNA). This Shewanella sp. (strain MR-4) protein is S-adenosylmethionine:tRNA ribosyltransferase-isomerase.